Reading from the N-terminus, the 450-residue chain is mRNA cleavage and polyadenylation factor CLP1 (450 aa).

ATP-binding positions include Glu-29, Lys-67, and 137–142; that span reads NSGKTS.

It belongs to the Clp1 family. Clp1 subfamily. As to quaternary structure, component of a pre-mRNA cleavage factor complex. Interacts directly with PCF11.

The protein localises to the nucleus. Its function is as follows. Required for endonucleolytic cleavage during polyadenylation-dependent pre-mRNA 3'-end formation. This is mRNA cleavage and polyadenylation factor CLP1 from Yarrowia lipolytica (strain CLIB 122 / E 150) (Yeast).